The chain runs to 817 residues: Kinesin-like protein 2 (817 aa).

Residues 1–155 (MEEEGHKSLT…YNDEKSVNAS (155 aa)) form a disordered region. The segment covering 8–23 (SLTSHLPQSSSSLSQS) has biased composition (low complexity). Positions 39-60 (IKTNSSSSNILKPRLSLQNEVN) are enriched in polar residues. Positions 76 to 86 (SLASVKSSSLA) are enriched in low complexity. A compositionally biased stretch (polar residues) spans 106 to 116 (PISSRSVSASS). The span at 122–132 (ASAVSSSLNSS) shows a compositional bias: low complexity. Residues 155–242 (SALRTTEDRL…VSQKGMESLE (88 aa)) adopt a coiled-coil conformation. ATP is bound by residues Asn-473, Arg-475, Arg-479, Glu-543, Gly-566, Ser-567, Gly-568, Lys-569, Thr-570, and Thr-778. The 335-residue stretch at 473-807 (NIRVFCRVRP…LRFATKVNNT (335 aa)) folds into the Kinesin motor domain.

The protein belongs to the TRAFAC class myosin-kinesin ATPase superfamily. Kinesin family. NCD subfamily.

It is found in the cytoplasm. Its subcellular location is the cytoskeleton. The protein resides in the spindle. It localises to the nucleus. The catalysed reaction is ATP + H2O = ADP + phosphate + H(+). It carries out the reaction ATP + H2O + a kinesin associated with a microtubule at position (n) = ADP + phosphate + a kinesin associated with a microtubule at position (n-1, toward the minus end).. In terms of biological role, minus end-directed microtubule (MT) motor that is involved in spindle microtubule shortening, kinetochore capture, and polarization of cytoplasmic microtubules. During mitosis, promotes spindle microtubule shortening by depolymerization. During metaphase, involved in the recapture of kinetochores displaced from the spindle and their transport towards the spindle pole body; promotes transport both by microtubule end-on pulling and by lateral sliding along the side of the microtubule. During interphase, required for the polarization of cytoplasmic microtubules where it orients the microtubule plus ends toward the cell ends and the minus ends toward the cell center. Required for karyogamy. This Schizosaccharomyces pombe (strain 972 / ATCC 24843) (Fission yeast) protein is Kinesin-like protein 2.